The primary structure comprises 469 residues: Glutamate--tRNA ligase 1 (469 aa).

Positions 8-18 (PSPTGYLHIGG) match the 'HIGH' region motif. Residues 117–137 (TPRYDGTWRPEPGKELPPVPA) are disordered. The 'KMSKS' region motif lies at 240–244 (KLSKR). Lysine 243 contributes to the ATP binding site.

Belongs to the class-I aminoacyl-tRNA synthetase family. Glutamate--tRNA ligase type 1 subfamily. Monomer.

It is found in the cytoplasm. It catalyses the reaction tRNA(Glu) + L-glutamate + ATP = L-glutamyl-tRNA(Glu) + AMP + diphosphate. In terms of biological role, catalyzes the attachment of glutamate to tRNA(Glu) in a two-step reaction: glutamate is first activated by ATP to form Glu-AMP and then transferred to the acceptor end of tRNA(Glu). This is Glutamate--tRNA ligase 1 from Aliarcobacter butzleri (strain RM4018) (Arcobacter butzleri).